The sequence spans 698 residues: Elongation factor G 1 (698 aa).

Positions 8-290 constitute a tr-type G domain; it reads ERYRNIGICA…AVIEFLPAPV (283 aa). GTP contacts are provided by residues 17–24, 88–92, and 142–145; these read AHVDAGKT, DTPGH, and NKMD.

The protein belongs to the TRAFAC class translation factor GTPase superfamily. Classic translation factor GTPase family. EF-G/EF-2 subfamily.

It is found in the cytoplasm. Catalyzes the GTP-dependent ribosomal translocation step during translation elongation. During this step, the ribosome changes from the pre-translocational (PRE) to the post-translocational (POST) state as the newly formed A-site-bound peptidyl-tRNA and P-site-bound deacylated tRNA move to the P and E sites, respectively. Catalyzes the coordinated movement of the two tRNA molecules, the mRNA and conformational changes in the ribosome. The sequence is that of Elongation factor G 1 from Aliivibrio fischeri (strain ATCC 700601 / ES114) (Vibrio fischeri).